A 130-amino-acid polypeptide reads, in one-letter code: MSKQSVVKTKKRVKRVITDGVAHICASFNNTIVTITDRQGNSLFWCTSGASGFRGSRKCTPFAAQVAAEKAGRAVLDYGMKSLEVRINGPGPGRESAVRSLSNVGYKITNIIDVTPIPHNGCRPPKKRRV.

Belongs to the universal ribosomal protein uS11 family. In terms of assembly, part of the 30S ribosomal subunit. Interacts with proteins S7 and S18. Binds to IF-3.

Located on the platform of the 30S subunit, it bridges several disparate RNA helices of the 16S rRNA. Forms part of the Shine-Dalgarno cleft in the 70S ribosome. The protein is Small ribosomal subunit protein uS11 of Xylella fastidiosa (strain M23).